The chain runs to 644 residues: Exoribonuclease 2 (644 aa).

Positions 189–516 constitute an RNB domain; sequence REDLTALDFV…NHRLLKAVIK (328 aa). An S1 motif domain is found at 561–643; the sequence is DTRFAAEIVD…ETRSIIARPV (83 aa).

Belongs to the RNR ribonuclease family. RNase II subfamily.

It localises to the cytoplasm. It catalyses the reaction Exonucleolytic cleavage in the 3'- to 5'-direction to yield nucleoside 5'-phosphates.. Involved in mRNA degradation. Hydrolyzes single-stranded polyribonucleotides processively in the 3' to 5' direction. In Escherichia coli (strain SMS-3-5 / SECEC), this protein is Exoribonuclease 2.